Consider the following 299-residue polypeptide: 33 kDa chaperonin (299 aa).

2 disulfides stabilise this stretch: C240–C242 and C273–C276.

It belongs to the HSP33 family. Post-translationally, under oxidizing conditions two disulfide bonds are formed involving the reactive cysteines. Under reducing conditions zinc is bound to the reactive cysteines and the protein is inactive.

The protein resides in the cytoplasm. In terms of biological role, redox regulated molecular chaperone. Protects both thermally unfolding and oxidatively damaged proteins from irreversible aggregation. Plays an important role in the bacterial defense system toward oxidative stress. This is 33 kDa chaperonin from Gloeothece citriformis (strain PCC 7424) (Cyanothece sp. (strain PCC 7424)).